A 347-amino-acid chain; its full sequence is Metacaspase-2 (347 aa).

The tract at residues 1–70 is regulates substrate access to the active site; that stretch reads MCSLITQLCD…QPWVATPLPG (70 aa). H158 is an active-site residue. D173, D189, and D190 together coordinate Ca(2+). The active site involves C213. D220 provides a ligand contact to Ca(2+).

Belongs to the peptidase C14B family. Monomer. Auto-proteolytic cleavage of the propeptide after Lys-55 and between the large and small subunits after Lys-268 is required for catalytic activity towards large protein substrates but is dispensable towards small oligopeptide substrates. After processing, the propeptide and the large and small subunits remain associated by non-covalent bonds. In vivo, the unprocessed enzyme appears to be the predominant form.

It is found in the recycling endosome. Its activity is regulated as follows. Activated by Ca(2+). In response to calcium binding, the 280-loop, the 280-loop, a disordered loop consisting of residues 269-275, undergoes a conformational change which stabilizes substrates in the active site. The binding to the substrate triggers the release of the N-terminal region resulting in the activation of the enzyme. Proteolytic cleavage is required for catalytic activity towards large protein substrates. In terms of biological role, cysteine protease that cleaves specifically after arginine or lysine residues. The chain is Metacaspase-2 from Trypanosoma brucei brucei.